The following is a 409-amino-acid chain: tRNA (guanine-N(7)-)-methyltransferase non-catalytic subunit wuho (409 aa).

The tract at residues Asp-48–Ala-72 is disordered. Over residues Thr-58–Ala-72 the composition is skewed to polar residues. WD repeat units lie at residues Ala-72–Asn-111, Met-122–Pro-161, Gly-167–Thr-206, and Gly-210–Arg-252.

It belongs to the WD repeat TRM82 family. Forms a heterodimer with the catalytic subunit.

Its subcellular location is the nucleus. It functions in the pathway tRNA modification; N(7)-methylguanine-tRNA biosynthesis. Functionally, required for the formation of N(7)-methylguanine at position 46 (m7G46) in tRNA. In the complex, it is required to stabilize and induce conformational changes of the catalytic subunit. This Aedes aegypti (Yellowfever mosquito) protein is tRNA (guanine-N(7)-)-methyltransferase non-catalytic subunit wuho.